The primary structure comprises 4328 residues: Cadherin-4 (4328 aa).

Positions 1-23 (MKKHRVFHLFLLIFCKAISLVTT) are cleaved as a signal peptide. At 24-4072 (SSSTEQIFEF…TVLEFLLKAE (4049 aa)) the chain is on the extracellular side. Residues asparagine 39 and asparagine 56 are each glycosylated (N-linked (GlcNAc...) asparagine). Cadherin domains lie at 108–153 (PLNR…SPVF) and 156–275 (GEQG…NPNI). N-linked (GlcNAc...) asparagine glycosylation is found at asparagine 196, asparagine 330, asparagine 339, asparagine 365, asparagine 431, asparagine 452, and asparagine 584. 11 Cadherin domains span residues 384-492 (DNEK…APVF), 507-608 (PGDV…SPVF), 609-720 (SSFP…SPQF), 721-826 (DEVS…PPKC), 827-934 (VVQH…AIEF), 935-1051 (DDVA…KPMY), 1047-1156 (KKPM…SPTF), 1175-1262 (RIFA…PPEI), 1265-1363 (KKSD…RPKF), 1364-1467 (SASH…SPYF), and 1476-1570 (VDES…APET). N-linked (GlcNAc...) asparagine glycans are attached at residues asparagine 811 and asparagine 899. A Cell attachment site motif is present at residues 1090–1092 (RGD). N-linked (GlcNAc...) asparagine glycosylation is present at asparagine 1192. The segment at 1246–1267 (NSAGQKPRKSKNSPPEISGKKS) is disordered. N-linked (GlcNAc...) asparagine glycosylation occurs at asparagine 1335. Asparagine 1610 is a glycosylation site (N-linked (GlcNAc...) asparagine). Positions 1671–1784 (RRQVYRGTIR…IDENDEPPRF (114 aa)) constitute a Cadherin 14 domain. Asparagine 1895 carries an N-linked (GlcNAc...) asparagine glycan. The Cadherin 15 domain occupies 1917-1984 (FSIVNPHEAF…ENINDETPIF (68 aa)). Asparagine 2059, asparagine 2150, asparagine 2216, asparagine 2367, asparagine 2413, asparagine 2440, and asparagine 2535 each carry an N-linked (GlcNAc...) asparagine glycan. Cadherin domains lie at 2187-2285 (EKLK…MPEF) and 2286-2397 (IRSD…PPRF). Cadherin domains are found at residues 2429-2505 (LQFS…PPFF), 2506-2608 (VLPF…VPRF), 2609-2712 (SNSH…APAF), 2719-2813 (FTIS…PPQF), 2828-2915 (SPIL…CPEA), 2913-3011 (PEAN…RPKI), 3012-3113 (IEKL…APTF), 3114-3216 (EKST…APKF), and 3217-3326 (EKEK…APTF). 5 N-linked (GlcNAc...) asparagine glycosylation sites follow: asparagine 2844, asparagine 2916, asparagine 2941, asparagine 3083, and asparagine 3143. N-linked (GlcNAc...) asparagine glycosylation occurs at asparagine 3330. 2 Cadherin domains span residues 3335-3428 (VQEG…APTM) and 3429-3554 (KPMK…VDEF). Asparagine 3512 carries an N-linked (GlcNAc...) asparagine glycan. The EGF-like 1 domain occupies 3706–3744 (ETNQCAKSPCEQWQLCIPSVHNSTYECVCPLGMEGDKCS). 10 cysteine pairs are disulfide-bonded: cysteine 3710–cysteine 3721, cysteine 3715–cysteine 3732, cysteine 3734–cysteine 3743, cysteine 3898–cysteine 3925, cysteine 3933–cysteine 3944, cysteine 3938–cysteine 3954, cysteine 3956–cysteine 3965, cysteine 3972–cysteine 3983, cysteine 3977–cysteine 3992, and cysteine 3994–cysteine 4003. N-linked (GlcNAc...) asparagine glycosylation occurs at asparagine 3727. One can recognise a Laminin G-like domain in the interval 3757 to 3925 (EAELSVGGDG…MKLFGAQPGC (169 aa)). EGF-like domains follow at residues 3929–3966 (TSSPCNDLPCQHAGTCISQGKSHFKCECPSRYSGNVCE) and 3968–4004 (DLEPCASSPCPTGIQCIPFYNDYLCKCPNGFTGKHCE). An N-linked (GlcNAc...) asparagine glycan is attached at asparagine 4043. Residues 4073-4093 (IVIVILGVLLLLLVFCLTFIT) form a helical membrane-spanning segment. At 4094–4328 (WKCCKKNRDP…IDEEVNIHIS (235 aa)) the chain is on the cytoplasmic side. Disordered regions lie at residues 4143 to 4215 (TSSV…SSLR) and 4268 to 4311 (NFER…PISL). The span at 4178–4196 (TRRDPLPSDKFRRVDETAN) shows a compositional bias: basic and acidic residues. The short motif at 4207 to 4209 (RGD) is the Cell attachment site element.

In larvae and adult, it is expressed in various tissues including pharyngeal muscle, hypodermis and gonad. In the nervous system it is expressed in sensory neurons and motor neurons in the ventral cord.

It is found in the cell membrane. Potential calcium-dependent cell-adhesion protein that controls axon guidance in the ventral cord. The protein is Cadherin-4 of Caenorhabditis elegans.